The chain runs to 428 residues: MKTLFVLFILILCVFAINANQQEEINQESTQQTHQNLLYKVQKWRTSLKDSSDAELKLSPALVVAGVLCFTAALISSASGIGDGFFFIPIMNLVAGIDLKAASSFSAFMVTGGSIANLINNHFGCKKLIDYDLALLLEPCMLLGVSVGVICNKVFPEWLITGLFVVFLMWSSMETCENGHTSWKLSLILREKEDMRDSRLAEVKRRRTIIFFKHLYLKIKKTETKQSFLGRNLGIISIKPCSVEYWILLSLQIPLALVFTILALSRTESLQEQSISNQEGTRLDHQFKRLMFPVMSFLAGLLGGIFGIGGGMIISPLLLRAGIPPQVTAATTSFMVFFSATMSGVQYLLLGMQNTEAAYVFSVICFFASTLGLVFAQKVVPHFRRASIIVFLVGTMMYLTTIVMASFGILVFYIDNDAGKDIGFQLPC.

11 helical membrane-spanning segments follow: residues 1-21 (MKTL…NANQ), 61-81 (ALVV…ASGI), 82-102 (GDGF…LKAA), 105-125 (FSAF…HFGC), 128-148 (LIDY…VSVG), 149-169 (VICN…VFLM), 245-265 (YWIL…LALS), 294-314 (VMSF…GMII), 332-352 (TSFM…LLGM), 356-376 (EAAY…LVFA), and 388-408 (IIVF…ASFG).

The protein belongs to the 4-toluene sulfonate uptake permease (TSUP) (TC 2.A.102) family.

The protein localises to the membrane. The protein is Sulfite exporter TauE/SafE family protein 6 of Arabidopsis thaliana (Mouse-ear cress).